The primary structure comprises 509 residues: uncharacterized protein (509 aa).

Residues 358 to 480 (RRIVIIDAIS…IIPFIVENGE (123 aa)) enclose the RNase NYN domain.

This is an uncharacterized protein from Methanocaldococcus jannaschii (strain ATCC 43067 / DSM 2661 / JAL-1 / JCM 10045 / NBRC 100440) (Methanococcus jannaschii).